The following is a 622-amino-acid chain: Low affinity potassium transport system protein Kup (622 aa).

The next 12 helical transmembrane spans lie at 9–29 (LPAI…TSPL), 49–69 (VFGF…IKYL), 103–123 (VIMG…TPAI), 137–157 (PQLD…LFMI), 165–185 (VGKL…GLGL), 213–233 (VSFI…ALYA), 247–267 (WFTV…ALLL), 276–296 (PFFL…AALA), 337–357 (IYIP…IVSF), 363–383 (LAAA…ILST), 396–416 (FVAL…TANL), and 419–439 (LLSG…VMTT).

Belongs to the HAK/KUP transporter (TC 2.A.72) family.

It is found in the cell inner membrane. The enzyme catalyses K(+)(in) + H(+)(in) = K(+)(out) + H(+)(out). Functionally, responsible for the low-affinity transport of potassium into the cell. Likely operates as a K(+):H(+) symporter. This is Low affinity potassium transport system protein Kup from Escherichia fergusonii (strain ATCC 35469 / DSM 13698 / CCUG 18766 / IAM 14443 / JCM 21226 / LMG 7866 / NBRC 102419 / NCTC 12128 / CDC 0568-73).